An 85-amino-acid chain; its full sequence is MAHKKAGGSTRNGRDSEAKRLGVKRFGGEAVLAGSIIVRQRGTKFHAGTNVGCGRDHTLFALADGKVKFEVKGPNNRKFISIEAE.

Residues 1-20 are disordered; sequence MAHKKAGGSTRNGRDSEAKR.

It belongs to the bacterial ribosomal protein bL27 family.

This is Large ribosomal subunit protein bL27 from Proteus mirabilis (strain HI4320).